Consider the following 241-residue polypeptide: tRNA (guanine-N(1)-)-methyltransferase (241 aa).

S-adenosyl-L-methionine-binding positions include Gly123 and 143–148; that span reads IGDYVL.

It belongs to the RNA methyltransferase TrmD family. In terms of assembly, homodimer.

It is found in the cytoplasm. The enzyme catalyses guanosine(37) in tRNA + S-adenosyl-L-methionine = N(1)-methylguanosine(37) in tRNA + S-adenosyl-L-homocysteine + H(+). Its function is as follows. Specifically methylates guanosine-37 in various tRNAs. This chain is tRNA (guanine-N(1)-)-methyltransferase, found in Roseobacter denitrificans (strain ATCC 33942 / OCh 114) (Erythrobacter sp. (strain OCh 114)).